We begin with the raw amino-acid sequence, 672 residues long: Protein OS-9 (672 aa).

Positions 1-26 (MAAEVLLSSLLGLLFLGLLLPARLTG) are cleaved as a signal peptide. The region spanning 108–230 (APCLLKTKDW…TIRTSRLCPH (123 aa)) is the MRH domain. Cys-110 and Cys-123 are disulfide-bonded. 3 residues coordinate a mannooligosaccharide derivative: Trp-117, Trp-118, and Gln-130. A glycan (N-linked (GlcNAc...) asparagine) is linked at Asn-177. 2 disulfide bridges follow: Cys-181/Cys-216 and Cys-196/Cys-228. Asp-182, Arg-188, Glu-212, and Tyr-218 together coordinate a mannooligosaccharide derivative. 4 disordered regions span residues 261 to 355 (RQAE…NVQV), 372 to 452 (KAAE…LLPS), 511 to 548 (ENQSPELVQKYKKRRVVPQKPPPSPHPTEEEPEHRVRV), and 637 to 672 (EANKERQRQSELESNYRRVWGSPGGEDTGDLDEFDF). Basic and acidic residues-rich tracts occupy residues 263–281 (AESKQHEEKTTEEVQDTDR), 294–310 (PKKEDVSPAKEEKESEL), 320–338 (AAAREEAQAGEQDLNHEAA), 372–386 (KAAEKGKPSVRREQP), and 394–409 (PQREAEGTKAKGKDGE). Over residues 414–435 (MEEEDGDDEEEEEEEEEDEEEQ) the composition is skewed to acidic residues. Residues 637–652 (EANKERQRQSELESNY) are compositionally biased toward basic and acidic residues. A compositionally biased stretch (acidic residues) spans 663 to 672 (DTGDLDEFDF).

Belongs to the OS-9 family. In terms of assembly, component of the HRD1 complex, which comprises at least SYNV1/HRD1, DERL1/2, FAM8A1, HERPUD1/HERP, OS9, SEL1L and UBE2J1. FAM8A1 is stabilized by interaction with SYNV1, which prevents its proteasomal degradation. OS9 and UBE2J1 recruitment to the complex may be mediated by SEL1L. Through this complex, may interact with ERLEC1 and HSPA5. Interacts (via C-terminus) with CPNE6 (via second C2 domain); this interaction occurs in a calcium-dependent manner in vitro. Interacts with CREB3. N-glycosylated. Post-translationally, intramolecular disulfide bonds.

The protein localises to the endoplasmic reticulum lumen. Lectin component of the HRD1 complex, which functions in endoplasmic reticulum (ER) quality control and ER-associated degradation (ERAD). Specifically recognizes and binds improperly folded glycoproteins as well as hyperglycosylated proteins, retain them in the ER, and transfers them to the ubiquitination machinery and promote their degradation. Possible targets include TRPV4 as well as hyperglycosylated HSP90B1. This chain is Protein OS-9 (Os9), found in Mus musculus (Mouse).